The primary structure comprises 151 residues: Dehydrin Rab16D (151 aa).

Residues M1–G138 are disordered. The span at E39–L51 shows a compositional bias: basic and acidic residues. Composition is skewed to low complexity over residues G90–G105 and I117–A132.

It belongs to the plant dehydrin family.

The polypeptide is Dehydrin Rab16D (RAB16D) (Oryza sativa subsp. indica (Rice)).